A 93-amino-acid chain; its full sequence is UPF0367 protein tsr0804 (93 aa).

It belongs to the UPF0367 family.

This is UPF0367 protein tsr0804 from Thermosynechococcus vestitus (strain NIES-2133 / IAM M-273 / BP-1).